Here is a 323-residue protein sequence, read N- to C-terminus: ADP-L-glycero-D-manno-heptose-6-epimerase (323 aa).

NADP(+) is bound by residues 10-11 (FI), 31-32 (DN), Lys38, Arg53, 75-79 (MGACS), and Asn92. The active-site Proton acceptor is Tyr143. Lys147 is a binding site for NADP(+). A substrate-binding site is contributed by Asn170. NADP(+)-binding residues include Val171 and Lys179. Lys179 functions as the Proton acceptor in the catalytic mechanism. Residues Asp181, Lys188, 202-205 (FRSC), Arg216, and Tyr281 contribute to the substrate site.

It belongs to the NAD(P)-dependent epimerase/dehydratase family. HldD subfamily. In terms of assembly, homopentamer. NADP(+) is required as a cofactor.

It catalyses the reaction ADP-D-glycero-beta-D-manno-heptose = ADP-L-glycero-beta-D-manno-heptose. It functions in the pathway nucleotide-sugar biosynthesis; ADP-L-glycero-beta-D-manno-heptose biosynthesis; ADP-L-glycero-beta-D-manno-heptose from D-glycero-beta-D-manno-heptose 7-phosphate: step 4/4. Catalyzes the interconversion between ADP-D-glycero-beta-D-manno-heptose and ADP-L-glycero-beta-D-manno-heptose via an epimerization at carbon 6 of the heptose. The protein is ADP-L-glycero-D-manno-heptose-6-epimerase of Nitratidesulfovibrio vulgaris (strain DP4) (Desulfovibrio vulgaris).